The primary structure comprises 533 residues: Glucose-6-phosphate isomerase (533 aa).

Residue E341 is the Proton donor of the active site. Catalysis depends on residues H372 and K501.

It belongs to the GPI family.

It localises to the cytoplasm. It carries out the reaction alpha-D-glucose 6-phosphate = beta-D-fructose 6-phosphate. It functions in the pathway carbohydrate biosynthesis; gluconeogenesis. The protein operates within carbohydrate degradation; glycolysis; D-glyceraldehyde 3-phosphate and glycerone phosphate from D-glucose: step 2/4. Functionally, catalyzes the reversible isomerization of glucose-6-phosphate to fructose-6-phosphate. The sequence is that of Glucose-6-phosphate isomerase from Cereibacter sphaeroides (strain ATCC 17029 / ATH 2.4.9) (Rhodobacter sphaeroides).